The following is a 502-amino-acid chain: 2,3-bisphosphoglycerate-independent phosphoglycerate mutase (502 aa).

Residues Asp-12 and Ser-62 each contribute to the Mn(2+) site. The active-site Phosphoserine intermediate is the Ser-62. Substrate is bound by residues His-123, 152-153, Arg-183, Arg-189, 255-258, and Lys-329; these read RD and RPDR. Mn(2+) is bound by residues Asp-394, His-398, Asp-435, His-436, and His-453.

Belongs to the BPG-independent phosphoglycerate mutase family. In terms of assembly, monomer. Requires Mn(2+) as cofactor.

It carries out the reaction (2R)-2-phosphoglycerate = (2R)-3-phosphoglycerate. It participates in carbohydrate degradation; glycolysis; pyruvate from D-glyceraldehyde 3-phosphate: step 3/5. In terms of biological role, catalyzes the interconversion of 2-phosphoglycerate and 3-phosphoglycerate. The sequence is that of 2,3-bisphosphoglycerate-independent phosphoglycerate mutase from Malacoplasma penetrans (strain HF-2) (Mycoplasma penetrans).